The following is a 292-amino-acid chain: Undecaprenyl-diphosphatase (292 aa).

Transmembrane regions (helical) follow at residues 1 to 21 (MSLV…FLPV), 46 to 66 (FVTI…RADI), 90 to 110 (LGWY…LLEH), 114 to 134 (ALGN…LLAA), 192 to 212 (FLLS…STVP), 225 to 245 (VVGT…LLAW), and 253 to 273 (VFVV…LSGV).

It belongs to the UppP family.

Its subcellular location is the cell inner membrane. The enzyme catalyses di-trans,octa-cis-undecaprenyl diphosphate + H2O = di-trans,octa-cis-undecaprenyl phosphate + phosphate + H(+). In terms of biological role, catalyzes the dephosphorylation of undecaprenyl diphosphate (UPP). Confers resistance to bacitracin. The protein is Undecaprenyl-diphosphatase of Anaeromyxobacter dehalogenans (strain 2CP-1 / ATCC BAA-258).